The sequence spans 352 residues: Ion-translocating oxidoreductase complex subunit D (352 aa).

Transmembrane regions (helical) follow at residues 20-40, 42-62, 78-109, 123-143, and 148-168; these read IMLLVLLAAVPGIAAQLWFFG, GTLVQILLASVSALLAEALVL, ALLTGLLLAVSIPPLAPWWMVVLGTVFAVIIA, PAMIGYVVLLISFPVQMTSWL, and IAVNIPGFIDAIQVIFSGHTA. Position 187 is an FMN phosphoryl threonine (threonine 187). The next 5 helical transmembrane spans lie at 214–234, 242–262, 267–287, 301–321, and 322–342; these read ILAGAGWQWVNLAWLAGGVWL, WHIPLSFLVTLTLCATLGWLF, LAAPQIHLLSGATMLGAFFIL, LIFGALAGLLVWLIRSFGGYP, and DGVAFAVLLANITVPLIDYYT.

The protein belongs to the NqrB/RnfD family. The complex is composed of six subunits: RsxA, RsxB, RsxC, RsxD, RsxE and RsxG. It depends on FMN as a cofactor.

The protein resides in the cell inner membrane. In terms of biological role, part of a membrane-bound complex that couples electron transfer with translocation of ions across the membrane. Required to maintain the reduced state of SoxR. In Escherichia coli O139:H28 (strain E24377A / ETEC), this protein is Ion-translocating oxidoreductase complex subunit D.